The primary structure comprises 387 residues: Hydroxycarboxylic acid receptor 3 (387 aa).

At M1–K28 the chain is on the extracellular side. Residues V29–W50 traverse the membrane as a helical segment. The Cytoplasmic portion of the chain corresponds to I51–R63. A helical transmembrane segment spans residues I64–D85. At Y86–L102 the chain is on the extracellular side. Cysteines 100 and 177 form a disulfide. The chain crosses the membrane as a helical span at residues V103–V123. Residues D124–W142 lie on the Cytoplasmic side of the membrane. The helical transmembrane segment at T143 to L163 threads the bilayer. The Extracellular segment spans residues K164 to L194. A helical transmembrane segment spans residues L195–A209. The Cytoplasmic segment spans residues R210–V236. A helical transmembrane segment spans residues A237–W256. Residues L257–D273 lie on the Extracellular side of the membrane. Residues L274–S298 form a helical membrane-spanning segment. The Cytoplasmic segment spans residues P299–E387. Residues G319–E343 form a disordered region.

Belongs to the G-protein coupled receptor 1 family. As to expression, expression largely restricted to adipose tissue and spleen.

Its subcellular location is the cell membrane. Functionally, receptor for 3-OH-octanoid acid mediates a negative feedback regulation of adipocyte lipolysis to counteract prolipolytic influences under conditions of physiological or pathological increases in beta-oxidation rates. Acts as a low affinity receptor for nicotinic acid. This pharmacological effect requires nicotinic acid doses that are much higher than those provided by a normal diet. This chain is Hydroxycarboxylic acid receptor 3 (HCAR3), found in Homo sapiens (Human).